The sequence spans 293 residues: GTPase Era (293 aa).

Residues 3–170 enclose the Era-type G domain; the sequence is KSGFITIIGR…VELMVKYMPE (168 aa). The interval 11-18 is G1; it reads GRPNVGKS. 11-18 is a binding site for GTP; it reads GRPNVGKS. Residues 37 to 41 are G2; the sequence is QTTRN. A G3 region spans residues 58–61; the sequence is DTPG. GTP is bound by residues 58-62 and 120-123; these read DTPGI and NKID. The tract at residues 120–123 is G4; sequence NKID. Positions 149 to 151 are G5; it reads ISA. A KH type-2 domain is found at 201-278; that stretch reads LSKEVPHGIA…YLEVWVKVKK (78 aa).

It belongs to the TRAFAC class TrmE-Era-EngA-EngB-Septin-like GTPase superfamily. Era GTPase family. In terms of assembly, monomer.

It localises to the cytoplasm. Its subcellular location is the cell membrane. An essential GTPase that binds both GDP and GTP, with rapid nucleotide exchange. Plays a role in 16S rRNA processing and 30S ribosomal subunit biogenesis and possibly also in cell cycle regulation and energy metabolism. In Clostridium kluyveri (strain NBRC 12016), this protein is GTPase Era.